The primary structure comprises 259 residues: PF03932 family protein CutC (259 aa).

The protein belongs to the CutC family. As to quaternary structure, homodimer.

It is found in the cytoplasm. This is PF03932 family protein CutC from Salmonella typhi.